The following is a 382-amino-acid chain: uncharacterized protein (382 aa).

Helical transmembrane passes span 14–34 (GLLL…LWLA), 45–65 (VVSS…GYVI), 79–99 (FIFA…SWLA), 102–122 (FVAG…LMCS), 131–151 (LLAA…LLVS), 157–177 (LMSV…PLLF), 204–224 (LGVN…GLMP), 235–255 (ASIG…QWPI), 270–290 (VQVF…AMAP), 291–311 (ALFI…AWAC), 325–345 (ALLL…AMLM), and 348–368 (FSDN…LLML).

It belongs to the major facilitator superfamily. YcaD (TC 2.A.1.26) family.

The protein resides in the cell inner membrane. This is an uncharacterized protein from Escherichia coli (strain K12 / MC4100 / BW2952).